The sequence spans 209 residues: 3-hexulose-6-phosphate synthase (209 aa).

Belongs to the HPS/KGPDC family. HPS subfamily. Homodimer.

The catalysed reaction is D-ribulose 5-phosphate + formaldehyde = D-arabino-hex-3-ulose 6-phosphate. The protein operates within one-carbon metabolism; formaldehyde assimilation via RuMP pathway; D-fructose 6-phosphate from D-ribulose 5-phosphate and formaldehyde: step 1/2. In terms of biological role, catalyzes the condensation of ribulose 5-phosphate with formaldehyde to form 3-hexulose 6-phosphate. This chain is 3-hexulose-6-phosphate synthase (rmpA), found in Methylomonas aminofaciens.